The following is a 256-amino-acid chain: Thiazole synthase (256 aa).

The active-site Schiff-base intermediate with DXP is the lysine 95. Residues glycine 156, 182–183, and 204–205 each bind 1-deoxy-D-xylulose 5-phosphate; these read AG and NT.

This sequence belongs to the ThiG family. As to quaternary structure, homotetramer. Forms heterodimers with either ThiH or ThiS.

It localises to the cytoplasm. It catalyses the reaction [ThiS sulfur-carrier protein]-C-terminal-Gly-aminoethanethioate + 2-iminoacetate + 1-deoxy-D-xylulose 5-phosphate = [ThiS sulfur-carrier protein]-C-terminal Gly-Gly + 2-[(2R,5Z)-2-carboxy-4-methylthiazol-5(2H)-ylidene]ethyl phosphate + 2 H2O + H(+). It participates in cofactor biosynthesis; thiamine diphosphate biosynthesis. Functionally, catalyzes the rearrangement of 1-deoxy-D-xylulose 5-phosphate (DXP) to produce the thiazole phosphate moiety of thiamine. Sulfur is provided by the thiocarboxylate moiety of the carrier protein ThiS. In vitro, sulfur can be provided by H(2)S. The protein is Thiazole synthase of Salmonella schwarzengrund (strain CVM19633).